The primary structure comprises 339 residues: tRNA N6-adenosine threonylcarbamoyltransferase (339 aa).

Fe cation contacts are provided by histidine 111 and histidine 115. Substrate-binding positions include 134 to 138 (LVSGG), aspartate 167, glycine 180, and asparagine 272. Residue aspartate 300 participates in Fe cation binding.

It belongs to the KAE1 / TsaD family. The cofactor is Fe(2+).

The protein resides in the cytoplasm. It carries out the reaction L-threonylcarbamoyladenylate + adenosine(37) in tRNA = N(6)-L-threonylcarbamoyladenosine(37) in tRNA + AMP + H(+). Required for the formation of a threonylcarbamoyl group on adenosine at position 37 (t(6)A37) in tRNAs that read codons beginning with adenine. Is involved in the transfer of the threonylcarbamoyl moiety of threonylcarbamoyl-AMP (TC-AMP) to the N6 group of A37, together with TsaE and TsaB. TsaD likely plays a direct catalytic role in this reaction. The sequence is that of tRNA N6-adenosine threonylcarbamoyltransferase from Sodalis glossinidius (strain morsitans).